The sequence spans 1143 residues: uncharacterized protein (1143 aa).

An N-terminal signal peptide occupies residues 1–20 (MKLLLLALILVLSNINLISG). The Extracellular portion of the chain corresponds to 21 to 1121 (NGLVWPHPRL…PAAGGEDSSA (1101 aa)). Gly residues predominate over residues 177–203 (NSGGSWSSGGSGNSGGGWSSGGSGNSG). Residues 177–1120 (NSGGSWSSGG…EPAAGGEDSS (944 aa)) are disordered. A compositionally biased stretch (low complexity) spans 222-236 (SSGGWTSGSHSSGSW). Residues 237–283 (SSGGGSGSSSGGQSSGSWSSGGGSSSGGHSSGSWSSGGGSSAGGGSS) are compositionally biased toward gly residues. The segment covering 284 to 296 (SGSHSSGSWSSGG) has biased composition (low complexity). A compositionally biased stretch (gly residues) spans 297–330 (SSSGGQSSGSWSSGGGSSSGGQSSGSWSSGGGSS). Residues 331 to 368 (SGSHSSGSWSSGGSSSGSHSSGSWSSGGSSSSSGNSGW) show a composition bias toward low complexity. Over residues 374-392 (GNTGGNTGGNTGGNTGGQS) the composition is skewed to gly residues. Low complexity predominate over residues 393-403 (SGNSGWMTASG). Gly residues-rich tracts occupy residues 404–418 (GNTG…GGQS) and 430–444 (GNTG…GGQS). 2 stretches are compositionally biased toward low complexity: residues 445–498 (SGSS…TSSG) and 506–541 (GSSS…SSGD). Composition is skewed to gly residues over residues 555 to 573 (GNTG…GGNS), 580 to 596 (GNSG…GGNS), 604 to 622 (GNTG…GGNS), 629 to 783 (GNSG…GGNS), 790 to 843 (GNSG…GGAS), and 851 to 905 (GNSG…GGNS). Positions 906 to 1059 (GAATGANSGA…GGNGASGAAN (154 aa)) are enriched in low complexity. Residues 1062 to 1078 (SIVTPNDQNVSPLSNSD) show a composition bias toward polar residues. A compositionally biased stretch (low complexity) spans 1094–1114 (PTSRAPTVTPTPTSSAEEPAA). Residues 1122-1142 (ISKYSIQSFGIFVLSMIIYLV) form a helical membrane-spanning segment. A topological domain (cytoplasmic) is located at residue isoleucine 1143.

Its subcellular location is the membrane. This is an uncharacterized protein from Dictyostelium discoideum (Social amoeba).